Reading from the N-terminus, the 201-residue chain is MKNPIIDNIPCVLLAGGKSSRFITNNIQTNKALMPLKSYSSLLEYQYTRLLKLFKKVIISTKKSYELNAPYLLEKESDLFSPLFGIHNAFLTLQTPYIFFIPIDTPLVSFESIKALCGIKNFSVVYAKSPTKEHYLISLWHQSTLNALNYALKTQNYRLSDLIKNASSTAIHFDKEEEFLNLNTLKDYELAVQILKEGSNG.

GTP-binding positions include 14 to 16 (LAG), lysine 31, and aspartate 104. Residue aspartate 104 coordinates Mg(2+).

The protein belongs to the MobA family. In terms of assembly, monomer. Mg(2+) serves as cofactor.

The protein resides in the cytoplasm. It carries out the reaction Mo-molybdopterin + GTP + H(+) = Mo-molybdopterin guanine dinucleotide + diphosphate. In terms of biological role, transfers a GMP moiety from GTP to Mo-molybdopterin (Mo-MPT) cofactor (Moco or molybdenum cofactor) to form Mo-molybdopterin guanine dinucleotide (Mo-MGD) cofactor. In Helicobacter pylori (strain G27), this protein is Molybdenum cofactor guanylyltransferase.